Here is a 601-residue protein sequence, read N- to C-terminus: Methionine--tRNA ligase (601 aa).

Positions proline 21–histidine 31 match the 'HIGH' region motif. Residues cysteine 153, cysteine 156, cysteine 166, and cysteine 169 each contribute to the Zn(2+) site. Asparagine 361 contributes to the ATP binding site.

Belongs to the class-I aminoacyl-tRNA synthetase family. MetG type 1 subfamily. As to quaternary structure, monomer. Zn(2+) serves as cofactor.

It is found in the cytoplasm. The catalysed reaction is tRNA(Met) + L-methionine + ATP = L-methionyl-tRNA(Met) + AMP + diphosphate. In terms of biological role, is required not only for elongation of protein synthesis but also for the initiation of all mRNA translation through initiator tRNA(fMet) aminoacylation. The polypeptide is Methionine--tRNA ligase (Cutibacterium acnes (strain DSM 16379 / KPA171202) (Propionibacterium acnes)).